A 419-amino-acid chain; its full sequence is 4-hydroxyphenylpyruvate dioxygenase (419 aa).

2 consecutive VOC domains span residues 37-185 (GYDH…LLSR) and 216-376 (RIDH…LFTR). Residues histidine 219, histidine 302, and glutamate 387 each contribute to the Fe cation site.

Belongs to the 4HPPD family. Requires Fe cation as cofactor.

It carries out the reaction 3-(4-hydroxyphenyl)pyruvate + O2 = homogentisate + CO2. It participates in amino-acid degradation; L-phenylalanine degradation; acetoacetate and fumarate from L-phenylalanine: step 3/6. The chain is 4-hydroxyphenylpyruvate dioxygenase (HPD4) from Pyricularia oryzae (strain 70-15 / ATCC MYA-4617 / FGSC 8958) (Rice blast fungus).